The sequence spans 79 residues: Small ribosomal subunit protein bS18 (79 aa).

This sequence belongs to the bacterial ribosomal protein bS18 family. As to quaternary structure, part of the 30S ribosomal subunit. Forms a tight heterodimer with protein bS6.

Binds as a heterodimer with protein bS6 to the central domain of the 16S rRNA, where it helps stabilize the platform of the 30S subunit. The protein is Small ribosomal subunit protein bS18 of Latilactobacillus sakei subsp. sakei (strain 23K) (Lactobacillus sakei subsp. sakei).